Here is a 1368-residue protein sequence, read N- to C-terminus: DNA-directed RNA polymerase subunit beta (1368 aa).

This sequence belongs to the RNA polymerase beta chain family. In terms of assembly, the RNAP catalytic core consists of 2 alpha, 1 beta, 1 beta' and 1 omega subunit. When a sigma factor is associated with the core the holoenzyme is formed, which can initiate transcription.

The enzyme catalyses RNA(n) + a ribonucleoside 5'-triphosphate = RNA(n+1) + diphosphate. In terms of biological role, DNA-dependent RNA polymerase catalyzes the transcription of DNA into RNA using the four ribonucleoside triphosphates as substrates. In Burkholderia thailandensis (strain ATCC 700388 / DSM 13276 / CCUG 48851 / CIP 106301 / E264), this protein is DNA-directed RNA polymerase subunit beta.